A 396-amino-acid chain; its full sequence is Phosphoglycerate kinase (396 aa).

Residues 21 to 23 (DIN), Arg36, 59 to 62 (HFGR), Arg118, and Arg151 contribute to the substrate site. ATP contacts are provided by residues Lys201, Glu323, and 353-356 (GGDT).

The protein belongs to the phosphoglycerate kinase family. As to quaternary structure, monomer.

It is found in the cytoplasm. It carries out the reaction (2R)-3-phosphoglycerate + ATP = (2R)-3-phospho-glyceroyl phosphate + ADP. It participates in carbohydrate degradation; glycolysis; pyruvate from D-glyceraldehyde 3-phosphate: step 2/5. This Ruegeria sp. (strain TM1040) (Silicibacter sp.) protein is Phosphoglycerate kinase.